We begin with the raw amino-acid sequence, 189 residues long: Elongation factor P (189 aa).

The residue at position 34 (lysine 34) is an N6-(3,6-diaminohexanoyl)-5-hydroxylysine.

This sequence belongs to the elongation factor P family. Post-translationally, may be beta-lysylated on the epsilon-amino group of Lys-34 by the combined action of EpmA and EpmB, and then hydroxylated on the C5 position of the same residue by EpmC (if this protein is present). Lysylation is critical for the stimulatory effect of EF-P on peptide-bond formation. The lysylation moiety may extend toward the peptidyltransferase center and stabilize the terminal 3-CCA end of the tRNA. Hydroxylation of the C5 position on Lys-34 may allow additional potential stabilizing hydrogen-bond interactions with the P-tRNA.

Its subcellular location is the cytoplasm. It functions in the pathway protein biosynthesis; polypeptide chain elongation. In terms of biological role, involved in peptide bond synthesis. Alleviates ribosome stalling that occurs when 3 or more consecutive Pro residues or the sequence PPG is present in a protein, possibly by augmenting the peptidyl transferase activity of the ribosome. Modification of Lys-34 is required for alleviation. The chain is Elongation factor P from Baumannia cicadellinicola subsp. Homalodisca coagulata.